Reading from the N-terminus, the 158-residue chain is pH 6 antigen (158 aa).

Residues 1–26 (MKMKCFAKNALAVTTLMIAACGMANA) form the signal peptide.

In terms of assembly, forms a homomer composed of subunits assembled in a large structure.

Its subcellular location is the fimbrium. Its function is as follows. Fibrillar structure, part of fimbriae, necessary for full virulence. The sequence is that of pH 6 antigen (psaA) from Yersinia pestis.